The sequence spans 251 residues: Elongation factor Ts (251 aa).

Residues 82–85 (TDFV) form an involved in Mg(2+) ion dislocation from EF-Tu region. The tract at residues 215–251 (QMGQKAPEPVAAAPQVEEKAPEPAAKDNPPAKGKKKK) is disordered. The span at 219 to 229 (KAPEPVAAAPQ) shows a compositional bias: low complexity. Residues 230–239 (VEEKAPEPAA) are compositionally biased toward basic and acidic residues.

Belongs to the EF-Ts family.

It localises to the cytoplasm. Functionally, associates with the EF-Tu.GDP complex and induces the exchange of GDP to GTP. It remains bound to the aminoacyl-tRNA.EF-Tu.GTP complex up to the GTP hydrolysis stage on the ribosome. This chain is Elongation factor Ts, found in Microcystis aeruginosa (strain NIES-843 / IAM M-2473).